A 424-amino-acid chain; its full sequence is CinA-like protein (424 aa).

Belongs to the CinA family.

The sequence is that of CinA-like protein from Prochlorococcus marinus (strain MIT 9301).